Consider the following 1066-residue polypeptide: Ribosomal protein S6 kinase delta-1 (1066 aa).

The 125-residue stretch at 8 to 132 (SADLARFYTV…DFFKGGIIND (125 aa)) folds into the PX domain. Residues 207 to 228 (VASDSEQSKTEEERESRSLFPG) are disordered. The segment covering 212–223 (EQSKTEEERESR) has biased composition (basic and acidic residues). The 29-residue stretch at 277 to 305 (VQGESSPTRREAVKRRTAEYLMRAESISS) folds into the MIT domain. Residues Ser-282, Ser-423, Ser-427, Ser-449, and Ser-455 each carry the phosphoserine modification. One can recognise a Protein kinase 1 domain in the interval 344-445 (GVIDKVLLVM…PTLAKVHLQQ (102 aa)). A disordered region spans residues 441–509 (VHLQQPTSSP…SGSSSEEECT (69 aa)). Positions 448–458 (SSPQDSSSFES) are enriched in low complexity. The segment covering 474–483 (SSLTPSSQDD) has biased composition (polar residues). The span at 492–503 (DSSPKWPDSGSS) shows a compositional bias: low complexity. 10 positions are modified to phosphoserine: Ser-494, Ser-528, Ser-583, Ser-605, Ser-608, Ser-640, Ser-661, Ser-664, Ser-667, and Ser-794. The disordered stretch occupies residues 553-596 (HLAADSDSPSTQLRAHELKFFPNDDPEAVSSPRTSDSLSRSKNS). The span at 582-593 (SSPRTSDSLSRS) shows a compositional bias: low complexity. The Protein kinase 2 domain maps to 794 to 1056 (SSDPKFQGLG…VEDIKSHPFF (263 aa)). Residues 801–809 (GLGVVESAV) and Arg-820 each bind ATP. Ser-872 is subject to Phosphoserine. Asp-929 functions as the Proton acceptor in the catalytic mechanism.

This sequence belongs to the protein kinase superfamily. Ser/Thr protein kinase family. S6 kinase subfamily. In terms of assembly, interacts with SPHK1 and phosphatidylinositol 3-phosphate. Interacts (via PX domain) with PRDX3. As to expression, highly expressed in testis, skeletal muscle, brain, heart, placenta, kidney and liver and weakly expressed in thymus, small intestine, lung and colon.

The protein resides in the cytoplasm. It is found in the membrane. It localises to the early endosome. The catalysed reaction is L-seryl-[protein] + ATP = O-phospho-L-seryl-[protein] + ADP + H(+). It catalyses the reaction L-threonyl-[protein] + ATP = O-phospho-L-threonyl-[protein] + ADP + H(+). Its function is as follows. May be involved in transmitting sphingosine-1 phosphate (SPP)-mediated signaling into the cell. Plays a role in the recruitment of PRDX3 to early endosomes. This Homo sapiens (Human) protein is Ribosomal protein S6 kinase delta-1 (RPS6KC1).